Here is a 139-residue protein sequence, read N- to C-terminus: Small ribosomal subunit protein bS16 (139 aa).

The segment at Glu85 to Asp108 is disordered. Over residues Thr97–Asp108 the composition is skewed to basic and acidic residues.

Belongs to the bacterial ribosomal protein bS16 family.

This chain is Small ribosomal subunit protein bS16, found in Leuconostoc mesenteroides subsp. mesenteroides (strain ATCC 8293 / DSM 20343 / BCRC 11652 / CCM 1803 / JCM 6124 / NCDO 523 / NBRC 100496 / NCIMB 8023 / NCTC 12954 / NRRL B-1118 / 37Y).